The sequence spans 327 residues: Eukaryotic translation initiation factor 3 subunit I (327 aa).

WD repeat units lie at residues 8-47 (GHQR…RLGT), 50-89 (GHIG…ALGK), 147-186 (EQQS…ELNS), 189-228 (DHTA…CLKT), and 286-327 (GHFG…HTFE).

The protein belongs to the eIF-3 subunit I family. Component of the eukaryotic translation initiation factor 3 (eIF-3) complex.

Its subcellular location is the cytoplasm. In terms of biological role, component of the eukaryotic translation initiation factor 3 (eIF-3) complex, which is involved in protein synthesis of a specialized repertoire of mRNAs and, together with other initiation factors, stimulates binding of mRNA and methionyl-tRNAi to the 40S ribosome. The eIF-3 complex specifically targets and initiates translation of a subset of mRNAs involved in cell proliferation. The polypeptide is Eukaryotic translation initiation factor 3 subunit I (Anopheles gambiae (African malaria mosquito)).